A 31-amino-acid chain; its full sequence is Kalata-B9 (31 aa).

Residues 1–31 (GSVFNCGETCVLGTCYTPGCTCNTYRVCTKD) constitute a cross-link (cyclopeptide (Gly-Asp)). 3 cysteine pairs are disulfide-bonded: Cys-6–Cys-20, Cys-10–Cys-22, and Cys-15–Cys-28.

The protein belongs to the cyclotide family. Bracelet subfamily. This peptide occurs in both cyclic and linear forms.

Functionally, probably participates in a plant defense mechanism. The polypeptide is Kalata-B9 (Oldenlandia affinis).